The sequence spans 158 residues: NAD(P)H-quinone oxidoreductase subunit N (158 aa).

This sequence belongs to the complex I NdhN subunit family. As to quaternary structure, NDH-1 can be composed of about 15 different subunits; different subcomplexes with different compositions have been identified which probably have different functions.

It is found in the cellular thylakoid membrane. It carries out the reaction a plastoquinone + NADH + (n+1) H(+)(in) = a plastoquinol + NAD(+) + n H(+)(out). The enzyme catalyses a plastoquinone + NADPH + (n+1) H(+)(in) = a plastoquinol + NADP(+) + n H(+)(out). In terms of biological role, NDH-1 shuttles electrons from an unknown electron donor, via FMN and iron-sulfur (Fe-S) centers, to quinones in the respiratory and/or the photosynthetic chain. The immediate electron acceptor for the enzyme in this species is believed to be plastoquinone. Couples the redox reaction to proton translocation, and thus conserves the redox energy in a proton gradient. Cyanobacterial NDH-1 also plays a role in inorganic carbon-concentration. The chain is NAD(P)H-quinone oxidoreductase subunit N from Rippkaea orientalis (strain PCC 8801 / RF-1) (Cyanothece sp. (strain PCC 8801)).